An 88-amino-acid polypeptide reads, in one-letter code: uncharacterized protein (88 aa).

The signal sequence occupies residues 1–22 (MLKASILFITISLTLMLENSYG). 3 cysteine pairs are disulfide-bonded: Cys59–Cys73, Cys66–Cys77, and Cys72–Cys82.

The protein localises to the secreted. This is an uncharacterized protein from Schistosoma japonicum (Blood fluke).